We begin with the raw amino-acid sequence, 2138 residues long: Conidial yellow pigment biosynthesis polyketide synthase melA (2138 aa).

The tract at residues 8 to 244 (YLFGDQTADF…TRVPIHGPYH (237 aa)) is N-terminal acylcarrier protein transacylase domain (SAT). In terms of domain architecture, Ketosynthase family 3 (KS3) spans 373–804 (QSKIAIIGLS…GGNTALMVED (432 aa)). Residues cysteine 545, histidine 680, and histidine 722 each act as for beta-ketoacyl synthase activity in the active site. A malonyl-CoA:ACP transacylase (MAT) domain region spans residues 910 to 1229 (FVFTGQGAQY…VSALYMAGIE (320 aa)). Serine 999 functions as the For acyl/malonyl transferase activity in the catalytic mechanism. The tract at residues 1288-1601 (SSAAQRVLET…RKILDMALPP (314 aa)) is product template (PT) domain. An N-terminal hotdog fold region spans residues 1292–1423 (QRVLETSGDN…CNIKFFDPSP (132 aa)). The 305-residue stretch at 1292 to 1596 (QRVLETSGDN…FQGLARKILD (305 aa)) folds into the PKS/mFAS DH domain. Histidine 1324 functions as the Proton acceptor; for dehydratase activity in the catalytic mechanism. Residues 1451-1596 (AHRMKRGMVY…FQGLARKILD (146 aa)) form a C-terminal hotdog fold region. The active-site Proton donor; for dehydratase activity is the aspartate 1509. A Carrier 1 domain is found at 1640–1714 (PSMATRALAI…DFKHLLAQMG (75 aa)). O-(pantetheine 4'-phosphoryl)serine is present on serine 1674. The disordered stretch occupies residues 1712–1758 (QMGPGESSDGSSSEGDMSSAASSTDLSSPNTSGLPTPANEKSMTHGL). Over residues 1713 to 1739 (MGPGESSDGSSSEGDMSSAASSTDLSS) the composition is skewed to low complexity. Residues 1740-1758 (PNTSGLPTPANEKSMTHGL) show a composition bias toward polar residues. In terms of domain architecture, Carrier 2 spans 1759–1836 (QGQNDSMRQI…DIETTLDLKP (78 aa)). The residue at position 1796 (serine 1796) is an O-(pantetheine 4'-phosphoryl)serine. The tract at residues 1863–2135 (TQHPPATSIL…ELARFIANSM (273 aa)) is claisen cyclase domain. Serine 1953 (for Claisen cyclase activity) is an active-site residue.

It carries out the reaction 6 malonyl-CoA + acetyl-CoA + 6 H(+) = naphtopyrone YWA1 + 6 CO2 + 7 CoA + H2O. It participates in pigment biosynthesis. It functions in the pathway polyketide biosynthesis; heptaketide naphthopyrone YWA1 biosynthesis. Functionally, non-reducing polyketide synthase involved in the biosynthesis of a yellow conidial pigment. Probably forms the heptaketide naphthopyrene YWA1 via condensation of acetate units. This is Conidial yellow pigment biosynthesis polyketide synthase melA from Penicillium expansum (Blue mold rot fungus).